We begin with the raw amino-acid sequence, 150 residues long: Large ribosomal subunit protein bL9 (150 aa).

The protein belongs to the bacterial ribosomal protein bL9 family.

Binds to the 23S rRNA. The protein is Large ribosomal subunit protein bL9 of Yersinia pseudotuberculosis serotype I (strain IP32953).